Reading from the N-terminus, the 355-residue chain is UDP-N-acetylglucosamine--N-acetylmuramyl-(pentapeptide) pyrophosphoryl-undecaprenol N-acetylglucosamine transferase (355 aa).

Residues 12–14 (TGG), N124, R163, S191, I243, 262–267 (ALTVAE), and Q288 contribute to the UDP-N-acetyl-alpha-D-glucosamine site.

Belongs to the glycosyltransferase 28 family. MurG subfamily.

It localises to the cell inner membrane. It carries out the reaction di-trans,octa-cis-undecaprenyl diphospho-N-acetyl-alpha-D-muramoyl-L-alanyl-D-glutamyl-meso-2,6-diaminopimeloyl-D-alanyl-D-alanine + UDP-N-acetyl-alpha-D-glucosamine = di-trans,octa-cis-undecaprenyl diphospho-[N-acetyl-alpha-D-glucosaminyl-(1-&gt;4)]-N-acetyl-alpha-D-muramoyl-L-alanyl-D-glutamyl-meso-2,6-diaminopimeloyl-D-alanyl-D-alanine + UDP + H(+). The protein operates within cell wall biogenesis; peptidoglycan biosynthesis. Its function is as follows. Cell wall formation. Catalyzes the transfer of a GlcNAc subunit on undecaprenyl-pyrophosphoryl-MurNAc-pentapeptide (lipid intermediate I) to form undecaprenyl-pyrophosphoryl-MurNAc-(pentapeptide)GlcNAc (lipid intermediate II). This is UDP-N-acetylglucosamine--N-acetylmuramyl-(pentapeptide) pyrophosphoryl-undecaprenol N-acetylglucosamine transferase from Tolumonas auensis (strain DSM 9187 / NBRC 110442 / TA 4).